A 128-amino-acid polypeptide reads, in one-letter code: Diacylglycerol kinase (128 aa).

Residue Glu-34 coordinates a divalent metal cation. 2 helical membrane-spanning segments follow: residues 35-55 and 58-78; these read SAFR…SYLA and FLEW…ELIN. Residue Glu-75 is the Proton acceptor of the active site. Glu-82 is a binding site for a divalent metal cation. The chain crosses the membrane as a helical span at residues 107–127; the sequence is QLIGLIFWTLIWGRYLLALYL.

It belongs to the bacterial diacylglycerol kinase family. Requires Mg(2+) as cofactor.

Its subcellular location is the cell inner membrane. The enzyme catalyses a 1,2-diacyl-sn-glycerol + ATP = a 1,2-diacyl-sn-glycero-3-phosphate + ADP + H(+). Its function is as follows. Catalyzes the ATP-dependent phosphorylation of sn-l,2-diacylglycerol (DAG) to phosphatidic acid. Involved in the recycling of diacylglycerol produced as a by-product during membrane-derived oligosaccharide (MDO) biosynthesis. This chain is Diacylglycerol kinase (dgkA), found in Helicobacter pylori (strain ATCC 700392 / 26695) (Campylobacter pylori).